Here is a 216-residue protein sequence, read N- to C-terminus: LexA repressor (216 aa).

The H-T-H motif DNA-binding region spans 29-49; the sequence is RAEIAQALGFRSPNAAEDHLK. Catalysis depends on for autocatalytic cleavage activity residues Ser134 and Lys171.

Belongs to the peptidase S24 family. Homodimer.

The enzyme catalyses Hydrolysis of Ala-|-Gly bond in repressor LexA.. In terms of biological role, represses a number of genes involved in the response to DNA damage (SOS response), including recA and lexA. In the presence of single-stranded DNA, RecA interacts with LexA causing an autocatalytic cleavage which disrupts the DNA-binding part of LexA, leading to derepression of the SOS regulon and eventually DNA repair. The polypeptide is LexA repressor (Bordetella parapertussis (strain 12822 / ATCC BAA-587 / NCTC 13253)).